The following is a 219-amino-acid chain: 3,4-dihydroxy-2-butanone 4-phosphate synthase (219 aa).

D-ribulose 5-phosphate is bound by residues 37-38 (RE), aspartate 42, 150-154 (RRGHT), and glutamate 174. Position 38 (glutamate 38) interacts with Mg(2+). Histidine 153 serves as a coordination point for Mg(2+).

Belongs to the DHBP synthase family. As to quaternary structure, homodimer. Requires Mg(2+) as cofactor. It depends on Mn(2+) as a cofactor.

The enzyme catalyses D-ribulose 5-phosphate = (2S)-2-hydroxy-3-oxobutyl phosphate + formate + H(+). Its pathway is cofactor biosynthesis; riboflavin biosynthesis; 2-hydroxy-3-oxobutyl phosphate from D-ribulose 5-phosphate: step 1/1. Catalyzes the conversion of D-ribulose 5-phosphate to formate and 3,4-dihydroxy-2-butanone 4-phosphate. The sequence is that of 3,4-dihydroxy-2-butanone 4-phosphate synthase from Edwardsiella ictaluri (strain 93-146).